Here is an 863-residue protein sequence, read N- to C-terminus: Dynamin-3 (863 aa).

The region spanning 28–294 (LLELPQIAVV…LTNHIRDTLP (267 aa)) is the Dynamin-type G domain. The tract at residues 38-45 (GGQSAGKS) is G1 motif. A GTP-binding site is contributed by 38-46 (GGQSAGKSS). Residues 64–66 (VTR) are G2 motif. Positions 136-139 (DLPG) are G3 motif. The G4 motif stretch occupies residues 205-208 (TKLD). 205–211 (TKLDLMD) is a GTP binding site. A Phosphotyrosine modification is found at Y231. Residues 235–238 (VNRS) form a G5 motif region. 236–239 (NRSQ) serves as a coordination point for GTP. The residue at position 299 (K299) is an N6-acetyllysine. Positions 515-621 (QVIRKGWLTV…WKASLLRAGV (107 aa)) constitute a PH domain. Phosphotyrosine is present on Y593. An N6-acetyllysine modification is found at K594. Disordered regions lie at residues 626 to 647 (SVGS…SMDP) and 742 to 863 (ATVS…SLLD). A compositionally biased stretch (polar residues) spans 627–642 (VGSNKTENDENGQAEN). The GED domain maps to 653–744 (VETIRNLVDS…IIGDINTATV (92 aa)). Phosphoserine is present on residues S763 and S767. 2 stretches are compositionally biased toward pro residues: residues 791–816 (PAIP…PPFP) and 826–849 (PQVP…PSPT). Phosphoserine is present on S847.

The protein belongs to the TRAFAC class dynamin-like GTPase superfamily. Dynamin/Fzo/YdjA family.

The protein localises to the cytoplasm. Its subcellular location is the cytoskeleton. It catalyses the reaction GTP + H2O = GDP + phosphate + H(+). Functionally, microtubule-associated force-producing protein involved in producing microtubule bundles and able to bind and hydrolyze GTP. Most probably involved in vesicular trafficking processes, in particular endocytosis. This Mus musculus (Mouse) protein is Dynamin-3 (Dnm3).